A 598-amino-acid chain; its full sequence is UvrABC system protein C (598 aa).

The GIY-YIG domain occupies 13–92 (SSPGVYLMKD…IKKYQPRYNV (80 aa)). One can recognise a UVR domain in the interval 206–241 (DTTIANLEEAIKKASQEHKFEHAAALYRTLTLIRQT).

This sequence belongs to the UvrC family. Interacts with UvrB in an incision complex.

Its subcellular location is the cytoplasm. Functionally, the UvrABC repair system catalyzes the recognition and processing of DNA lesions. UvrC both incises the 5' and 3' sides of the lesion. The N-terminal half is responsible for the 3' incision and the C-terminal half is responsible for the 5' incision. The protein is UvrABC system protein C of Chlamydia muridarum (strain MoPn / Nigg).